The primary structure comprises 446 residues: Phosphoglucosamine mutase (446 aa).

Ser-102 serves as the catalytic Phosphoserine intermediate. Mg(2+) is bound by residues Ser-102, Asp-241, Asp-243, and Asp-245. Ser-102 is modified (phosphoserine).

It belongs to the phosphohexose mutase family. Mg(2+) serves as cofactor. In terms of processing, activated by phosphorylation.

The enzyme catalyses alpha-D-glucosamine 1-phosphate = D-glucosamine 6-phosphate. Functionally, catalyzes the conversion of glucosamine-6-phosphate to glucosamine-1-phosphate. The chain is Phosphoglucosamine mutase from Yersinia pseudotuberculosis serotype O:1b (strain IP 31758).